The sequence spans 445 residues: MARKLFIQTHGCQMNEYDSTRMVDLLESSHGLEPTDNPEEADVLLLNTCSIREKAQEKVFHQLGRWKKLKDAKPDMIIGVGGCVASQEGDAIRDRAPYVDVVFGPQTLHRLPGLITQAASTRELAIDVTFPEIEKFDNLPEPSVDGPSAFVSIMEGCSKYCTFCVVPYTRGEEVSRPVQPVLKEIQHLADMGVREVNLLGQNVNAYQGVGADGDTLDLADLIRLIRDIDGIDRIRYTTSHPVEFSEALIQVYEDVPELVSHLHLPVQSGSDRILAMMKRNHMVLEYKSKLRKLKRIRPDISFSSDFIIGFPGETDRDFEDTMNLIHDIGFDMSFSFIYSARPGTPAADLPDDVDMEVKKQRLAILQQRINQNVQDISRKMVGSTQRILVDGFSKKDPGQLKGRTENNRVVNFQCDDTDLIGKFVDVTIAKAYSNSLLGTDPRNPS.

The region spanning 3 to 120 (RKLFIQTHGC…LPGLITQAAS (118 aa)) is the MTTase N-terminal domain. Cys12, Cys49, Cys83, Cys157, Cys161, and Cys164 together coordinate [4Fe-4S] cluster. A Radical SAM core domain is found at 143-375 (SVDGPSAFVS…QQRINQNVQD (233 aa)). In terms of domain architecture, TRAM spans 378–442 (RKMVGSTQRI…SNSLLGTDPR (65 aa)).

The protein belongs to the methylthiotransferase family. MiaB subfamily. Monomer. The cofactor is [4Fe-4S] cluster.

The protein resides in the cytoplasm. The enzyme catalyses N(6)-dimethylallyladenosine(37) in tRNA + (sulfur carrier)-SH + AH2 + 2 S-adenosyl-L-methionine = 2-methylsulfanyl-N(6)-dimethylallyladenosine(37) in tRNA + (sulfur carrier)-H + 5'-deoxyadenosine + L-methionine + A + S-adenosyl-L-homocysteine + 2 H(+). Catalyzes the methylthiolation of N6-(dimethylallyl)adenosine (i(6)A), leading to the formation of 2-methylthio-N6-(dimethylallyl)adenosine (ms(2)i(6)A) at position 37 in tRNAs that read codons beginning with uridine. This chain is tRNA-2-methylthio-N(6)-dimethylallyladenosine synthase, found in Alcanivorax borkumensis (strain ATCC 700651 / DSM 11573 / NCIMB 13689 / SK2).